The sequence spans 261 residues: Probable glutathione-independent glyoxalase hsp3103 (261 aa).

Catalysis depends on residues Cys162, His163, and Glu196.

This sequence belongs to the peptidase C56 family. HSP31-like subfamily.

The catalysed reaction is methylglyoxal + H2O = (R)-lactate + H(+). Its function is as follows. Catalyzes the conversion of methylglyoxal (MG) to D-lactate in a single glutathione (GSH)-independent step. May play a role in detoxifying endogenously produced glyoxals. Involved in protection against reactive oxygen species (ROS). This chain is Probable glutathione-independent glyoxalase hsp3103, found in Schizosaccharomyces pombe (strain 972 / ATCC 24843) (Fission yeast).